Here is a 1325-residue protein sequence, read N- to C-terminus: Nucleoporin nup146 (1325 aa).

Disordered regions lie at residues 1-20 (MNAE…AGGS), 453-474 (VRAS…FVKN), 758-951 (GEGL…PKIH), and 973-994 (FPKQ…QESL). The span at 763 to 778 (QQKTSKALPSTGITKL) shows a compositional bias: polar residues. The span at 779 to 791 (SENDNEKAEESNE) shows a compositional bias: basic and acidic residues. A compositionally biased stretch (polar residues) spans 792 to 801 (TKGFNTTIAK). The segment covering 802–811 (QNDKSSKSEG) has biased composition (basic and acidic residues). Polar residues-rich tracts occupy residues 816-835 (ANMS…SKPS) and 850-861 (FTFNKPSETPPF). Residues 867-881 (LVEKESKQDVSDTSD) show a composition bias toward basic and acidic residues. Thr899 carries the phosphothreonine modification. Residues 927-937 (SEIEDQDEESS) are compositionally biased toward acidic residues. The residue at position 946 (Thr946) is a Phosphothreonine. 3 positions are modified to phosphoserine: Ser1041, Ser1043, and Ser1044.

It localises to the cytoplasm. Its subcellular location is the nucleus. In terms of biological role, functions as a component of the nuclear pore complex (NPC). NPC components, collectively referred to as nucleoporins (NUPs), can play the role of both NPC structural components and of docking or interaction partners for transiently associated nuclear transport factors. Active directional transport is assured by both, a Phe-Gly (FG) repeat affinity gradient for these transport factors across the NPC and a transport cofactor concentration gradient across the nuclear envelope. This Schizosaccharomyces pombe (strain 972 / ATCC 24843) (Fission yeast) protein is Nucleoporin nup146 (nup146).